Consider the following 159-residue polypeptide: Ribosomal RNA large subunit methyltransferase H (159 aa).

S-adenosyl-L-methionine-binding positions include Leu-76, Gly-108, and 127 to 132; that span reads FGLLTL.

Belongs to the RNA methyltransferase RlmH family. In terms of assembly, homodimer.

Its subcellular location is the cytoplasm. It catalyses the reaction pseudouridine(1915) in 23S rRNA + S-adenosyl-L-methionine = N(3)-methylpseudouridine(1915) in 23S rRNA + S-adenosyl-L-homocysteine + H(+). In terms of biological role, specifically methylates the pseudouridine at position 1915 (m3Psi1915) in 23S rRNA. The sequence is that of Ribosomal RNA large subunit methyltransferase H from Streptococcus pyogenes serotype M5 (strain Manfredo).